Consider the following 999-residue polypeptide: Signal peptide, CUB and EGF-like domain-containing protein 2 (999 aa).

The first 31 residues, 1–31, serve as a signal peptide directing secretion; the sequence is MGVAGRNRPGAAWAVLLLLLLLPPLLLLAGA. Positions 45 to 85 constitute an EGF-like 1; calcium-binding domain; the sequence is DVDECAQGLDDCHADALCQNTPTSYKCSCKPGYQGEGRQCE. Disulfide bonds link Cys-49–Cys-62, Cys-56–Cys-71, Cys-73–Cys-84, Cys-90–Cys-102, Cys-98–Cys-111, and Cys-113–Cys-126. Positions 86-127 constitute an EGF-like 2; calcium-binding domain; sequence DIDECGNELNGGCVHDCLNIPGNYRCTCFDGFMLAHDGHNCL. Residues 128-168 enclose the EGF-like 3; calcium-binding domain; that stretch reads DVDECLENNGGCQHTCVNVMGSYECCCKEGFFLSDNQHTCI. EGF-like domains lie at 177 to 213, 217 to 252, and 286 to 321; these read CMNK…QRDC, CNHG…GRSC, and CAVN…GKTC. In terms of domain architecture, EGF-like 7; calcium-binding spans 323-363; sequence DIDECQTRNGGCDHFCKNIVGSFDCGCKKGFKLLTDEKSCQ. The EGF-like 8; calcium-binding domain occupies 364–402; it reads DVDECSLDRTCDHSCINHPGTFACACNRGYTLYGFTHCG. Cystine bridges form between Cys-368/Cys-378, Cys-374/Cys-387, Cys-389/Cys-401, Cys-407/Cys-418, Cys-414/Cys-427, and Cys-429/Cys-442. Residues 403–443 enclose the EGF-like 9; calcium-binding domain; that stretch reads DTNECSINNGGCQQVCVNTVGSYECQCHPGYKLHWNKKDCV. A glycan (N-linked (GlcNAc...) asparagine) is linked at Asn-659. Cys-809 and Cys-835 are disulfide-bonded. Residues 809 to 921 enclose the CUB domain; the sequence is CGGELGDFTG…RGFQVPYVTY (113 aa). Residues 847–856 form an interaction with the cholesterol-anchor of SHH region; that stretch reads ILIVVPEIFL. Cys-862 and Cys-883 form a disulfide bridge.

Forms homooligomers. Forms heterooligomers with SCUBE1. Forms heterooligomers with SCUBE3. Interacts with SHH via the cholesterol anchor of the dually lipid-modified SHH (ShhNp). Interacts with PTCH1. Interacts with VEGFR2. Post-translationally, N-glycosylated. Expressed in a broad spectrum of adult tissues.

The protein localises to the secreted. It localises to the cell surface. Functionally, lipid-binding protein required for SHH long-range signaling by binding to the dually lipid-modified SHH (ShhNp) and by promoting ShhNp mobilization, solubilization and release from the cell membrane. Acts by enhancing the proteolytic processing (shedding) of the lipid-modified N- and C- terminal of ShhNp at the cell surface. Synergizes with DISP1 to increase SHH secretion. Probable cell surface coreceptor for VEGFR2 involved in VEGFR2-mediated angiogenesis. The protein is Signal peptide, CUB and EGF-like domain-containing protein 2 of Homo sapiens (Human).